The following is a 493-amino-acid chain: Glutamyl-tRNA(Gln) amidotransferase subunit A (493 aa).

Residues lysine 81 and serine 156 each act as charge relay system in the active site. The Acyl-ester intermediate role is filled by serine 180.

It belongs to the amidase family. GatA subfamily. As to quaternary structure, heterotrimer of A, B and C subunits.

It catalyses the reaction L-glutamyl-tRNA(Gln) + L-glutamine + ATP + H2O = L-glutaminyl-tRNA(Gln) + L-glutamate + ADP + phosphate + H(+). In terms of biological role, allows the formation of correctly charged Gln-tRNA(Gln) through the transamidation of misacylated Glu-tRNA(Gln) in organisms which lack glutaminyl-tRNA synthetase. The reaction takes place in the presence of glutamine and ATP through an activated gamma-phospho-Glu-tRNA(Gln). This Mycolicibacterium paratuberculosis (strain ATCC BAA-968 / K-10) (Mycobacterium paratuberculosis) protein is Glutamyl-tRNA(Gln) amidotransferase subunit A.